Reading from the N-terminus, the 400-residue chain is Endoglucanase 5A (400 aa).

The signal sequence occupies residues 1–26 (MKKITTIFVVLLMTVALFSIGNTTAA). Substrate contacts are provided by residues histidine 61, 65–66 (WY), tyrosine 92, and histidine 127. Glutamate 165 serves as the catalytic Proton donor. Substrate is bound at residue tyrosine 228. The Nucleophile role is filled by glutamate 254. Substrate is bound by residues 260-261 (AT), tryptophan 288, and 293-295 (KDE). A disordered region spans residues 328–363 (ESASIPPSDPTPPSDPGEPDPTPPSDPGEYPAWDPN). A compositionally biased stretch (pro residues) spans 334-353 (PSDPTPPSDPGEPDPTPPSD). The Chitin-binding type-3 domain occupies 357 to 396 (YPAWDPNQIYTNEIVYHNGQLWQAKWWTQNQEPGDPYGPW).

The protein belongs to the glycosyl hydrolase 5 (cellulase A) family. As to quaternary structure, monomer.

Its subcellular location is the secreted. The catalysed reaction is Endohydrolysis of (1-&gt;4)-beta-D-glucosidic linkages in cellulose, lichenin and cereal beta-D-glucans.. The protein is Endoglucanase 5A (cel5A) of Salipaludibacillus agaradhaerens (Bacillus agaradhaerens).